The following is a 199-amino-acid chain: MLVPIVVEQTGRGERSYDIYSRLLKDRIIFLGGAIDDTVSNLVIAQLLFLEAEDPDKDIHLYINSPGGVVTAGMAIYDTMRYIKAPVSTICVGQAASMGAFLLSGGEKGKRFSLANSRIMIHQPLGGFQGQATDIHIHAQEILRMKKKLNELLAEHSGQTVEKIEADTERDYFMSGEDAKTYGIIDSIITRNTITGGSR.

The active-site Nucleophile is the serine 97. Histidine 122 is a catalytic residue.

This sequence belongs to the peptidase S14 family. Fourteen ClpP subunits assemble into 2 heptameric rings which stack back to back to give a disk-like structure with a central cavity, resembling the structure of eukaryotic proteasomes.

It localises to the cytoplasm. It carries out the reaction Hydrolysis of proteins to small peptides in the presence of ATP and magnesium. alpha-casein is the usual test substrate. In the absence of ATP, only oligopeptides shorter than five residues are hydrolyzed (such as succinyl-Leu-Tyr-|-NHMec, and Leu-Tyr-Leu-|-Tyr-Trp, in which cleavage of the -Tyr-|-Leu- and -Tyr-|-Trp bonds also occurs).. Its function is as follows. Cleaves peptides in various proteins in a process that requires ATP hydrolysis. Has a chymotrypsin-like activity. Plays a major role in the degradation of misfolded proteins. This is ATP-dependent Clp protease proteolytic subunit from Geotalea daltonii (strain DSM 22248 / JCM 15807 / FRC-32) (Geobacter daltonii).